A 185-amino-acid chain; its full sequence is Elongation factor P (185 aa).

The protein belongs to the elongation factor P family.

It localises to the cytoplasm. It functions in the pathway protein biosynthesis; polypeptide chain elongation. Involved in peptide bond synthesis. Stimulates efficient translation and peptide-bond synthesis on native or reconstituted 70S ribosomes in vitro. Probably functions indirectly by altering the affinity of the ribosome for aminoacyl-tRNA, thus increasing their reactivity as acceptors for peptidyl transferase. This is Elongation factor P from Desulfitobacterium hafniense (strain DSM 10664 / DCB-2).